Here is a 229-residue protein sequence, read N- to C-terminus: MTKKKAFTPLLYLASIVFLPWWISLSLNKSLESWVTNWWNTRQSETFLNDIQEKSILEKFIELEELFLLDEMIKECPETHLQKLRMGIHKETIQLIKMYNEDPIHTILHFSTNIICFVILSGYSILGNEELLILNSWIQQFLYNLSDTIKAFSILLLTDLCIGFHSPHGWELMIGSVYKDFGFAHNDQIISGLVSTFPVILDTILKYWIFRYLNRVSPSLVVIYHSMND.

Transmembrane regions (helical) follow at residues 7–27 (FTPL…SLSL), 114–134 (IICF…LLIL), 154–174 (ILLL…ELMI), and 189–209 (IISG…KYWI).

Belongs to the CemA family.

It is found in the plastid. The protein localises to the chloroplast inner membrane. It carries out the reaction K(+)(in) + H(+)(out) = K(+)(out) + H(+)(in). Functionally, contributes to K(+)/H(+) antiport activity by supporting proton efflux to control proton extrusion and homeostasis in chloroplasts in a light-dependent manner to modulate photosynthesis. Prevents excessive induction of non-photochemical quenching (NPQ) under continuous-light conditions. Indirectly promotes efficient inorganic carbon uptake into chloroplasts. This is Potassium/proton antiporter CemA from Vitis vinifera (Grape).